A 179-amino-acid chain; its full sequence is Cytochrome b6-f complex iron-sulfur subunit (179 aa).

The chain crosses the membrane as a helical span at residues 21–43; it reads LLTFGTVTGVALGALYPVVNYFI. Residues 61–162 form the Rieske domain; it reads GNDIIVSEFL…ANVSDDKLVF (102 aa). Positions 108, 110, 126, and 129 each coordinate [2Fe-2S] cluster. C113 and C128 are disulfide-bonded.

The protein belongs to the Rieske iron-sulfur protein family. The 4 large subunits of the cytochrome b6-f complex are cytochrome b6, subunit IV (17 kDa polypeptide, PetD), cytochrome f and the Rieske protein, while the 4 small subunits are PetG, PetL, PetM and PetN. The complex functions as a dimer. The cofactor is [2Fe-2S] cluster.

It is found in the cellular thylakoid membrane. It catalyses the reaction 2 oxidized [plastocyanin] + a plastoquinol + 2 H(+)(in) = 2 reduced [plastocyanin] + a plastoquinone + 4 H(+)(out). Component of the cytochrome b6-f complex, which mediates electron transfer between photosystem II (PSII) and photosystem I (PSI), cyclic electron flow around PSI, and state transitions. The chain is Cytochrome b6-f complex iron-sulfur subunit from Trichodesmium erythraeum (strain IMS101).